A 97-amino-acid polypeptide reads, in one-letter code: Large ribosomal subunit protein bL28 (97 aa).

Positions 1 to 20 are disordered; that stretch reads MSRRCELTAKGPQVGHKVSH.

It belongs to the bacterial ribosomal protein bL28 family.

The chain is Large ribosomal subunit protein bL28 from Afipia carboxidovorans (strain ATCC 49405 / DSM 1227 / KCTC 32145 / OM5) (Oligotropha carboxidovorans).